The following is a 205-amino-acid chain: Ribonuclease HII (205 aa).

An RNase H type-2 domain is found at 1–203 (MKAGIDEAGK…VSNLRQKTLD (203 aa)). A divalent metal cation is bound by residues Asp-6 and Glu-7. Arg-46 contacts substrate. Asp-101 provides a ligand contact to a divalent metal cation. 3 residues coordinate substrate: Lys-143, Arg-146, and Tyr-164.

The protein belongs to the RNase HII family. Mn(2+) serves as cofactor. It depends on Mg(2+) as a cofactor.

The protein resides in the cytoplasm. The catalysed reaction is Endonucleolytic cleavage to 5'-phosphomonoester.. Functionally, endonuclease that specifically degrades the RNA of RNA-DNA hybrids. This Archaeoglobus fulgidus (strain ATCC 49558 / DSM 4304 / JCM 9628 / NBRC 100126 / VC-16) protein is Ribonuclease HII (rnhB).